We begin with the raw amino-acid sequence, 242 residues long: MMMDLFETGSYFFYLDGENVTLQPLEVAEGSPLYPGSDGTLSPCQDQMPQEAGSDSSGEEHVLAPPGLQPPHCPGQCLIWACKTCKRKSAPTDRRKAATLRERRRLKKINEAFEALKRRTVANPNQRLPKVEILRSAISYIERLQDLLHRLDQQEKMQELGVDPYSYKPKQEILEGADFLRTCSPQWPSVSDHSRGLVITAKEGGANVDASASSSLQRLSSIVDSISSEERKLPSVEEVVEK.

The tract at residues 31–63 (SPLYPGSDGTLSPCQDQMPQEAGSDSSGEEHVL) is disordered. A compositionally biased stretch (polar residues) spans 39–56 (GTLSPCQDQMPQEAGSDS). A bHLH domain is found at 93 to 144 (DRRKAATLRERRRLKKINEAFEALKRRTVANPNQRLPKVEILRSAISYIERL).

In terms of assembly, efficient DNA binding requires dimerization with another bHLH protein. Interacts with CSRP3. In terms of tissue distribution, skeletal muscle.

It localises to the nucleus. Its function is as follows. Involved in muscle differentiation (myogenic factor). Induces fibroblasts to differentiate into myoblasts. Probable sequence specific DNA-binding protein. The protein is Myogenic factor 6 (Myf6) of Mus musculus (Mouse).